The sequence spans 455 residues: Probable circularly permuted 1,3-beta-glucanase TOS1 (455 aa).

An N-terminal signal peptide occupies residues 1 to 23; that stretch reads MLQKLSMTALVGLFSSVVSLVNA. Residues 158-221 form a disordered region; the sequence is TADSTNTVVG…SSSSSSNTNG (64 aa). Residues 172–189 show a composition bias toward polar residues; sequence SSYTKDSTVLSSSAQAVE. The segment covering 190–219 has biased composition (low complexity); the sequence is TSESQSSISSSKTTSSAAAASSSSSSSSNT. N-linked (GlcNAc...) asparagine glycosylation is present at Asn-236. The ExDxxE motif motif lies at 372-377; the sequence is EMDLFE. N-linked (GlcNAc...) asparagine glycosylation is present at Asn-417.

Belongs to the PGA52 family.

It is found in the secreted. It localises to the cell wall. It carries out the reaction Hydrolysis of (1-&gt;3)-beta-D-glucosidic linkages in (1-&gt;3)-beta-D-glucans.. Probable circularly permuted 1,3-beta-glucanase involved in cell wall modification through beta-1,3-glucan network alterations such as increased branching or remodeling. The sequence is that of Probable circularly permuted 1,3-beta-glucanase TOS1 from Saccharomyces cerevisiae (strain ATCC 204508 / S288c) (Baker's yeast).